Consider the following 433-residue polypeptide: ATP-dependent protease ATPase subunit HslU (433 aa).

ATP-binding positions include V18, 60-65, D246, E311, and R383; that span reads GVGKTE.

Belongs to the ClpX chaperone family. HslU subfamily. A double ring-shaped homohexamer of HslV is capped on each side by a ring-shaped HslU homohexamer. The assembly of the HslU/HslV complex is dependent on binding of ATP.

It is found in the cytoplasm. Functionally, ATPase subunit of a proteasome-like degradation complex; this subunit has chaperone activity. The binding of ATP and its subsequent hydrolysis by HslU are essential for unfolding of protein substrates subsequently hydrolyzed by HslV. HslU recognizes the N-terminal part of its protein substrates and unfolds these before they are guided to HslV for hydrolysis. The protein is ATP-dependent protease ATPase subunit HslU of Rhodopseudomonas palustris (strain BisA53).